The primary structure comprises 388 residues: Succinate--CoA ligase [ADP-forming] subunit beta (388 aa).

In terms of domain architecture, ATP-grasp spans 9 to 244 (KEILRKFGVA…LDEEDPAEIE (236 aa)). ATP contacts are provided by residues lysine 46, 53-55 (GRG), glutamate 99, alanine 102, and glutamate 107. Residues asparagine 199 and aspartate 213 each coordinate Mg(2+). Substrate-binding positions include asparagine 264 and 321-323 (GIM).

Belongs to the succinate/malate CoA ligase beta subunit family. As to quaternary structure, heterotetramer of two alpha and two beta subunits. It depends on Mg(2+) as a cofactor.

It carries out the reaction succinate + ATP + CoA = succinyl-CoA + ADP + phosphate. The catalysed reaction is GTP + succinate + CoA = succinyl-CoA + GDP + phosphate. It functions in the pathway carbohydrate metabolism; tricarboxylic acid cycle; succinate from succinyl-CoA (ligase route): step 1/1. Succinyl-CoA synthetase functions in the citric acid cycle (TCA), coupling the hydrolysis of succinyl-CoA to the synthesis of either ATP or GTP and thus represents the only step of substrate-level phosphorylation in the TCA. The beta subunit provides nucleotide specificity of the enzyme and binds the substrate succinate, while the binding sites for coenzyme A and phosphate are found in the alpha subunit. In Burkholderia cenocepacia (strain HI2424), this protein is Succinate--CoA ligase [ADP-forming] subunit beta.